The chain runs to 402 residues: Pyridinium-3,5-bisthiocarboxylic acid mononucleotide nickel insertion protein (402 aa).

The protein belongs to the LarC family.

It catalyses the reaction Ni(II)-pyridinium-3,5-bisthiocarboxylate mononucleotide = pyridinium-3,5-bisthiocarboxylate mononucleotide + Ni(2+). In terms of biological role, involved in the biosynthesis of a nickel-pincer cofactor ((SCS)Ni(II) pincer complex). Binds Ni(2+), and functions in nickel delivery to pyridinium-3,5-bisthiocarboxylic acid mononucleotide (P2TMN), to form the mature cofactor. Is thus probably required for the activation of nickel-pincer cofactor-dependent enzymes. The sequence is that of Pyridinium-3,5-bisthiocarboxylic acid mononucleotide nickel insertion protein from Thermotoga sp. (strain RQ2).